The primary structure comprises 708 residues: B-cell lymphoma 6 protein homolog (708 aa).

Residues Thr-32–Glu-99 form the BTB domain. Positions Ala-303–Gln-317 are enriched in basic and acidic residues. 2 disordered regions span residues Ala-303–Thr-371 and Pro-431–Leu-470. 2 stretches are compositionally biased toward polar residues: residues Ser-333 to Pro-370 and Pro-431 to Asn-454. C2H2-type zinc fingers lie at residues Phe-520 to His-543, Tyr-548 to His-570, Tyr-576 to His-598, Tyr-604 to His-626, Tyr-632 to His-654, and Tyr-660 to His-683.

It localises to the nucleus. Its function is as follows. Transcriptional repressor mainly required for germinal center (GC) formation and antibody affinity maturation which has different mechanisms of action specific to the lineage and biological functions. Forms complexes with different corepressors and histone deacetylases to repress the transcriptional expression of different subsets of target genes. Represses its target genes by binding directly to the DNA sequence 5'-TTCCTAGAA-3' (BCL6-binding site) or indirectly by repressing the transcriptional activity of transcription factors. In GC B-cells, represses genes that function in differentiation, inflammation, apoptosis and cell cycle control, also autoregulates its transcriptional expression and up-regulates, indirectly, the expression of some genes important for GC reactions, such as AICDA, through the repression of microRNAs expression. An important function is to allow GC B-cells to proliferate very rapidly in response to T-cell dependent antigens and tolerate the physiological DNA breaks required for immunglobulin class switch recombination and somatic hypermutation without inducing a p53/TP53-dependent apoptotic response. In follicular helper CD4(+) T-cells (T(FH) cells), promotes the expression of T(FH)-related genes but inhibits the differentiation of T(H)1, T(H)2 and T(H)17 cells. Also required for the establishment and maintenance of immunological memory for both T- and B-cells. Suppresses macrophage proliferation through competition with STAT5 for STAT-binding motifs binding on certain target genes, such as CCL2 and CCND2. In response to genotoxic stress, controls cell cycle arrest in GC B-cells in both p53/TP53-dependedent and -independent manners. Besides, also controls neurogenesis through the alteration of the composition of NOTCH-dependent transcriptional complexes at selective NOTCH targets, such as HES5, including the recruitment of the deacetylase SIRT1 and resulting in an epigenetic silencing leading to neuronal differentiation. This chain is B-cell lymphoma 6 protein homolog, found in Gallus gallus (Chicken).